The primary structure comprises 380 residues: Protein RecA (380 aa).

65-72 is an ATP binding site; sequence GPESSGKT. Positions 329 to 380 are disordered; that stretch reads DATGEETSETDDQAKEAKDKGTAKNGSKGQSKSTKATPAETALDLGDQPTEK. Positions 340–350 are enriched in basic and acidic residues; sequence DQAKEAKDKGT. Positions 352 to 364 are enriched in polar residues; it reads KNGSKGQSKSTKA.

Belongs to the RecA family.

The protein resides in the cytoplasm. Its function is as follows. Can catalyze the hydrolysis of ATP in the presence of single-stranded DNA, the ATP-dependent uptake of single-stranded DNA by duplex DNA, and the ATP-dependent hybridization of homologous single-stranded DNAs. It interacts with LexA causing its activation and leading to its autocatalytic cleavage. The chain is Protein RecA from Lactiplantibacillus plantarum (strain ATCC BAA-793 / NCIMB 8826 / WCFS1) (Lactobacillus plantarum).